The chain runs to 421 residues: Gamma-glutamyl phosphate reductase (421 aa).

Belongs to the gamma-glutamyl phosphate reductase family.

The protein resides in the cytoplasm. The catalysed reaction is L-glutamate 5-semialdehyde + phosphate + NADP(+) = L-glutamyl 5-phosphate + NADPH + H(+). It functions in the pathway amino-acid biosynthesis; L-proline biosynthesis; L-glutamate 5-semialdehyde from L-glutamate: step 2/2. Its function is as follows. Catalyzes the NADPH-dependent reduction of L-glutamate 5-phosphate into L-glutamate 5-semialdehyde and phosphate. The product spontaneously undergoes cyclization to form 1-pyrroline-5-carboxylate. The chain is Gamma-glutamyl phosphate reductase from Bordetella petrii (strain ATCC BAA-461 / DSM 12804 / CCUG 43448).